The sequence spans 330 residues: MTTATGTKPKKMEAFKMERGVKYRDAAKTSVIQVRNIDPDQELLPKPSWMKIKLPAASAKIDSIKHGMRRHGLHSVCEEASCPNLHECFNHGTATFMIMGAICTRRCPFCDVAHGKPLPLDPEEPRKVAETVQDMKLKYVVITSVDRDDLADRGAAHFAATVREIKALNPECKVEILVPDFRGRVEQAVEILKQNPPDVFNHNLENVPRLYREVRPGADYKWSLELLKIFKQEFPNIPTKSGLMVGLGETNEEILEVMQDLRDHGVTMLTIGQYLQPSRHHLKVERYVPPEEFDMFRSEAERMGFEHAACGPFVRSSYHADLQAKGELVK.

Cys-77, Cys-82, Cys-88, Cys-103, Cys-107, Cys-110, and Ser-317 together coordinate [4Fe-4S] cluster. The Radical SAM core domain occupies 89–306 (FNHGTATFMI…RSEAERMGFE (218 aa)).

This sequence belongs to the radical SAM superfamily. Lipoyl synthase family. It depends on [4Fe-4S] cluster as a cofactor.

It is found in the cytoplasm. It carries out the reaction [[Fe-S] cluster scaffold protein carrying a second [4Fe-4S](2+) cluster] + N(6)-octanoyl-L-lysyl-[protein] + 2 oxidized [2Fe-2S]-[ferredoxin] + 2 S-adenosyl-L-methionine + 4 H(+) = [[Fe-S] cluster scaffold protein] + N(6)-[(R)-dihydrolipoyl]-L-lysyl-[protein] + 4 Fe(3+) + 2 hydrogen sulfide + 2 5'-deoxyadenosine + 2 L-methionine + 2 reduced [2Fe-2S]-[ferredoxin]. Its pathway is protein modification; protein lipoylation via endogenous pathway; protein N(6)-(lipoyl)lysine from octanoyl-[acyl-carrier-protein]: step 2/2. Catalyzes the radical-mediated insertion of two sulfur atoms into the C-6 and C-8 positions of the octanoyl moiety bound to the lipoyl domains of lipoate-dependent enzymes, thereby converting the octanoylated domains into lipoylated derivatives. This is Lipoyl synthase from Actinobacillus pleuropneumoniae serotype 5b (strain L20).